Consider the following 374-residue polypeptide: Ribosomal RNA large subunit methyltransferase G (374 aa).

It belongs to the methyltransferase superfamily. RlmG family.

The protein localises to the cytoplasm. It catalyses the reaction guanosine(1835) in 23S rRNA + S-adenosyl-L-methionine = N(2)-methylguanosine(1835) in 23S rRNA + S-adenosyl-L-homocysteine + H(+). Specifically methylates the guanine in position 1835 (m2G1835) of 23S rRNA. This is Ribosomal RNA large subunit methyltransferase G from Pseudomonas putida (strain W619).